The primary structure comprises 312 residues: Glyoxylate/hydroxypyruvate reductase A (312 aa).

Arg227 is an active-site residue. Residue His275 is the Proton donor of the active site.

This sequence belongs to the D-isomer specific 2-hydroxyacid dehydrogenase family. GhrA subfamily.

The protein localises to the cytoplasm. The enzyme catalyses glycolate + NADP(+) = glyoxylate + NADPH + H(+). The catalysed reaction is (R)-glycerate + NAD(+) = 3-hydroxypyruvate + NADH + H(+). It catalyses the reaction (R)-glycerate + NADP(+) = 3-hydroxypyruvate + NADPH + H(+). Its function is as follows. Catalyzes the NADPH-dependent reduction of glyoxylate and hydroxypyruvate into glycolate and glycerate, respectively. The chain is Glyoxylate/hydroxypyruvate reductase A from Salmonella choleraesuis (strain SC-B67).